Consider the following 391-residue polypeptide: Processive diacylglycerol beta-glucosyltransferase (391 aa).

It belongs to the glycosyltransferase 28 family. UgtP subfamily.

The protein resides in the cell membrane. The enzyme catalyses a 1,2-diacyl-3-O-(beta-D-glucopyranosyl)-sn-glycerol + UDP-alpha-D-glucose = a 1,2-diacyl-3-O-(beta-D-Glc-(1-&gt;6)-beta-D-Glc)-sn-glycerol + UDP + H(+). It catalyses the reaction a 1,2-diacyl-sn-glycerol + UDP-alpha-D-glucose = a 1,2-diacyl-3-O-(beta-D-glucopyranosyl)-sn-glycerol + UDP + H(+). Its pathway is glycolipid metabolism; diglucosyl-diacylglycerol biosynthesis. Its function is as follows. Processive glucosyltransferase involved in the biosynthesis of both the bilayer- and non-bilayer-forming membrane glucolipids. Is able to successively transfer two glucosyl residues to diacylglycerol (DAG), thereby catalyzing the formation of beta-monoglucosyl-DAG (3-O-(beta-D-glucopyranosyl)-1,2-diacyl-sn-glycerol) and beta-diglucosyl-DAG (3-O-(beta-D-glucopyranosyl-beta-(1-&gt;6)-D-glucopyranosyl)-1,2-diacyl-sn-glycerol). Beta-diglucosyl-DAG is the predominant glycolipid found in Bacillales and is also used as a membrane anchor for lipoteichoic acid (LTA). The chain is Processive diacylglycerol beta-glucosyltransferase from Staphylococcus epidermidis (strain ATCC 35984 / DSM 28319 / BCRC 17069 / CCUG 31568 / BM 3577 / RP62A).